Reading from the N-terminus, the 194-residue chain is GTP cyclohydrolase 1 (194 aa).

Residues C83, H86, and C155 each coordinate Zn(2+).

This sequence belongs to the GTP cyclohydrolase I family. As to quaternary structure, toroid-shaped homodecamer, composed of two pentamers of five dimers.

The catalysed reaction is GTP + H2O = 7,8-dihydroneopterin 3'-triphosphate + formate + H(+). It functions in the pathway cofactor biosynthesis; 7,8-dihydroneopterin triphosphate biosynthesis; 7,8-dihydroneopterin triphosphate from GTP: step 1/1. The protein is GTP cyclohydrolase 1 of Streptococcus pyogenes serotype M5 (strain Manfredo).